A 682-amino-acid polypeptide reads, in one-letter code: Potassium-transporting ATPase ATP-binding subunit (682 aa).

4 helical membrane passes run 34–54 (PVMF…IAMA), 62–82 (ALFS…ANFA), 219–239 (IALT…TATL), and 254–274 (VLVA…LSAI). Catalysis depends on Asp-307, which acts as the 4-aspartylphosphate intermediate. ATP-binding positions include Asp-344, Glu-348, 377–384 (FTAQSRMS), and Lys-395. Residues Asp-518 and Asp-522 each coordinate Mg(2+). 3 consecutive transmembrane segments (helical) span residues 588–608 (FAII…LNIM), 616–636 (AILS…PLAL), and 656–676 (IYGL…DLLL).

This sequence belongs to the cation transport ATPase (P-type) (TC 3.A.3) family. Type IA subfamily. As to quaternary structure, the system is composed of three essential subunits: KdpA, KdpB and KdpC.

The protein localises to the cell inner membrane. The catalysed reaction is K(+)(out) + ATP + H2O = K(+)(in) + ADP + phosphate + H(+). Part of the high-affinity ATP-driven potassium transport (or Kdp) system, which catalyzes the hydrolysis of ATP coupled with the electrogenic transport of potassium into the cytoplasm. This subunit is responsible for energy coupling to the transport system and for the release of the potassium ions to the cytoplasm. The polypeptide is Potassium-transporting ATPase ATP-binding subunit (Escherichia coli O17:K52:H18 (strain UMN026 / ExPEC)).